A 452-amino-acid polypeptide reads, in one-letter code: Bifunctional protein GlmU (452 aa).

The pyrophosphorylase stretch occupies residues 1–226; it reads MVAVAILAAG…SQEILGINDR (226 aa). UDP-N-acetyl-alpha-D-glucosamine is bound by residues 7 to 10, Lys-21, Gln-73, and 78 to 79; these read LAAG and GT. Residue Asp-103 coordinates Mg(2+). Residues Gly-140, Glu-155, Asn-170, and Asn-224 each coordinate UDP-N-acetyl-alpha-D-glucosamine. Asn-224 is a binding site for Mg(2+). A linker region spans residues 227–247; that stretch reads LQLADSFRILQERIRQQWMLA. Residues 248 to 452 form an N-acetyltransferase region; that stretch reads GVTLVDPTSI…ENWSTPTTEQ (205 aa). UDP-N-acetyl-alpha-D-glucosamine is bound by residues Arg-329 and Lys-347. His-359 acts as the Proton acceptor in catalysis. Tyr-362 and Asn-373 together coordinate UDP-N-acetyl-alpha-D-glucosamine. Residues Ala-376, 382-383, Ala-419, and Arg-436 contribute to the acetyl-CoA site; that span reads NY.

In the N-terminal section; belongs to the N-acetylglucosamine-1-phosphate uridyltransferase family. It in the C-terminal section; belongs to the transferase hexapeptide repeat family. As to quaternary structure, homotrimer. Mg(2+) serves as cofactor.

The protein localises to the cytoplasm. It catalyses the reaction alpha-D-glucosamine 1-phosphate + acetyl-CoA = N-acetyl-alpha-D-glucosamine 1-phosphate + CoA + H(+). It carries out the reaction N-acetyl-alpha-D-glucosamine 1-phosphate + UTP + H(+) = UDP-N-acetyl-alpha-D-glucosamine + diphosphate. It functions in the pathway nucleotide-sugar biosynthesis; UDP-N-acetyl-alpha-D-glucosamine biosynthesis; N-acetyl-alpha-D-glucosamine 1-phosphate from alpha-D-glucosamine 6-phosphate (route II): step 2/2. Its pathway is nucleotide-sugar biosynthesis; UDP-N-acetyl-alpha-D-glucosamine biosynthesis; UDP-N-acetyl-alpha-D-glucosamine from N-acetyl-alpha-D-glucosamine 1-phosphate: step 1/1. It participates in bacterial outer membrane biogenesis; LPS lipid A biosynthesis. Catalyzes the last two sequential reactions in the de novo biosynthetic pathway for UDP-N-acetylglucosamine (UDP-GlcNAc). The C-terminal domain catalyzes the transfer of acetyl group from acetyl coenzyme A to glucosamine-1-phosphate (GlcN-1-P) to produce N-acetylglucosamine-1-phosphate (GlcNAc-1-P), which is converted into UDP-GlcNAc by the transfer of uridine 5-monophosphate (from uridine 5-triphosphate), a reaction catalyzed by the N-terminal domain. This chain is Bifunctional protein GlmU, found in Synechococcus sp. (strain ATCC 27144 / PCC 6301 / SAUG 1402/1) (Anacystis nidulans).